A 147-amino-acid polypeptide reads, in one-letter code: Large ribosomal subunit protein bL9 (147 aa).

The protein belongs to the bacterial ribosomal protein bL9 family.

Its function is as follows. Binds to the 23S rRNA. This Flavobacterium psychrophilum (strain ATCC 49511 / DSM 21280 / CIP 103535 / JIP02/86) protein is Large ribosomal subunit protein bL9.